Reading from the N-terminus, the 545-residue chain is Chaperonin GroEL 1 (545 aa).

ATP contacts are provided by residues 30–33, K51, 87–91, G415, 479–481, and D495; these read TLGP, DGTTT, and NAA.

This sequence belongs to the chaperonin (HSP60) family. In terms of assembly, forms a cylinder of 14 subunits composed of two heptameric rings stacked back-to-back. Interacts with the co-chaperonin GroES.

It is found in the cytoplasm. It catalyses the reaction ATP + H2O + a folded polypeptide = ADP + phosphate + an unfolded polypeptide.. Its function is as follows. Together with its co-chaperonin GroES, plays an essential role in assisting protein folding. The GroEL-GroES system forms a nano-cage that allows encapsulation of the non-native substrate proteins and provides a physical environment optimized to promote and accelerate protein folding. The protein is Chaperonin GroEL 1 of Methylococcus capsulatus (strain ATCC 33009 / NCIMB 11132 / Bath).